A 194-amino-acid polypeptide reads, in one-letter code: Adenylate kinase isoenzyme 1 (194 aa).

An N-acetylmethionine modification is found at methionine 1. 18–23 (GSGKGT) lines the ATP pocket. The residue at position 38 (serine 38) is a Phosphoserine. Residues 38 to 67 (STGDLLRAEVSSGSARGKMLSEIMEKGQLV) are NMP. AMP contacts are provided by residues threonine 39, arginine 44, 65-67 (QLV), 94-97 (GYPR), and glutamine 101. The LID stretch occupies residues 131–141 (KRGETSGRVDD). Position 132 (arginine 132) interacts with ATP. Positions 138 and 149 each coordinate AMP. Glycine 177 lines the ATP pocket.

The protein belongs to the adenylate kinase family. AK1 subfamily. As to quaternary structure, monomer. It depends on Mg(2+) as a cofactor.

The protein resides in the cytoplasm. It catalyses the reaction a ribonucleoside 5'-phosphate + ATP = a ribonucleoside 5'-diphosphate + ADP. The enzyme catalyses AMP + ATP = 2 ADP. It carries out the reaction dAMP + ATP = dADP + ADP. The catalysed reaction is dATP + AMP = dADP + ADP. It catalyses the reaction dAMP + dATP = 2 dADP. The enzyme catalyses a 2'-deoxyribonucleoside 5'-diphosphate + ATP = a 2'-deoxyribonucleoside 5'-triphosphate + ADP. It carries out the reaction a ribonucleoside 5'-diphosphate + ATP = a ribonucleoside 5'-triphosphate + ADP. The catalysed reaction is CDP + GTP = CTP + GDP. It catalyses the reaction GDP + ATP = GTP + ADP. The enzyme catalyses UDP + ATP = UTP + ADP. It carries out the reaction GTP + UDP = UTP + GDP. The catalysed reaction is dTDP + GTP = dTTP + GDP. It catalyses the reaction dCDP + GTP = dCTP + GDP. The enzyme catalyses dGDP + ATP = dGTP + ADP. It carries out the reaction dADP + GTP = dATP + GDP. The catalysed reaction is thiamine diphosphate + ADP = thiamine triphosphate + AMP. Functionally, catalyzes the reversible transfer of the terminal phosphate group between ATP and AMP. Also displays broad nucleoside diphosphate kinase activity. Plays an important role in cellular energy homeostasis and in adenine nucleotide metabolism. Also catalyzes at a very low rate the synthesis of thiamine triphosphate (ThTP) from thiamine diphosphate (ThDP) and ADP. This Bos taurus (Bovine) protein is Adenylate kinase isoenzyme 1.